A 212-amino-acid chain; its full sequence is Pyrrolidone-carboxylate peptidase (212 aa).

Residues Glu78, Cys141, and His165 contribute to the active site.

The protein belongs to the peptidase C15 family. Homotetramer.

The protein resides in the cytoplasm. It carries out the reaction Release of an N-terminal pyroglutamyl group from a polypeptide, the second amino acid generally not being Pro.. In terms of biological role, removes 5-oxoproline from various penultimate amino acid residues except L-proline. This chain is Pyrrolidone-carboxylate peptidase, found in Staphylococcus haemolyticus (strain JCSC1435).